A 122-amino-acid polypeptide reads, in one-letter code: Large ribosomal subunit protein uL14 (122 aa).

The protein belongs to the universal ribosomal protein uL14 family. Part of the 50S ribosomal subunit. Forms a cluster with proteins L3 and L19. In the 70S ribosome, L14 and L19 interact and together make contacts with the 16S rRNA in bridges B5 and B8.

Binds to 23S rRNA. Forms part of two intersubunit bridges in the 70S ribosome. This Citrifermentans bemidjiense (strain ATCC BAA-1014 / DSM 16622 / JCM 12645 / Bem) (Geobacter bemidjiensis) protein is Large ribosomal subunit protein uL14.